The following is a 251-amino-acid chain: Triosephosphate isomerase (251 aa).

9–11 (NWK) serves as a coordination point for substrate. H95 acts as the Electrophile in catalysis. Residue E167 is the Proton acceptor of the active site. Residues G173, S213, and 234 to 235 (GG) each bind substrate. S213 is modified (phosphoserine).

This sequence belongs to the triosephosphate isomerase family. Homodimer.

It is found in the cytoplasm. The enzyme catalyses D-glyceraldehyde 3-phosphate = dihydroxyacetone phosphate. It participates in carbohydrate biosynthesis; gluconeogenesis. Its pathway is carbohydrate degradation; glycolysis; D-glyceraldehyde 3-phosphate from glycerone phosphate: step 1/1. In terms of biological role, involved in the gluconeogenesis. Catalyzes stereospecifically the conversion of dihydroxyacetone phosphate (DHAP) to D-glyceraldehyde-3-phosphate (G3P). This chain is Triosephosphate isomerase, found in Bacillus cereus (strain B4264).